A 294-amino-acid chain; its full sequence is ATP synthase gamma chain (294 aa).

It belongs to the ATPase gamma chain family. As to quaternary structure, F-type ATPases have 2 components, CF(1) - the catalytic core - and CF(0) - the membrane proton channel. CF(1) has five subunits: alpha(3), beta(3), gamma(1), delta(1), epsilon(1). CF(0) has three main subunits: a, b and c.

It localises to the cell inner membrane. In terms of biological role, produces ATP from ADP in the presence of a proton gradient across the membrane. The gamma chain is believed to be important in regulating ATPase activity and the flow of protons through the CF(0) complex. This is ATP synthase gamma chain from Nitrosomonas eutropha (strain DSM 101675 / C91 / Nm57).